We begin with the raw amino-acid sequence, 279 residues long: Oxygen-dependent coproporphyrinogen-III oxidase (279 aa).

Residue Ser102 coordinates substrate. 2 residues coordinate a divalent metal cation: His106 and His116. The Proton donor role is filled by His116. 118–120 (NTR) contacts substrate. 2 residues coordinate a divalent metal cation: His149 and His179. The important for dimerization stretch occupies residues 244 to 279 (YVEFNLLYDRGTKFGLMTDGNVEAILMSLPPEVKFN).

The protein belongs to the aerobic coproporphyrinogen-III oxidase family. Homodimer. A divalent metal cation is required as a cofactor.

Its subcellular location is the cytoplasm. The enzyme catalyses coproporphyrinogen III + O2 + 2 H(+) = protoporphyrinogen IX + 2 CO2 + 2 H2O. Its pathway is porphyrin-containing compound metabolism; protoporphyrin-IX biosynthesis; protoporphyrinogen-IX from coproporphyrinogen-III (O2 route): step 1/1. In terms of biological role, involved in the heme biosynthesis. Catalyzes the aerobic oxidative decarboxylation of propionate groups of rings A and B of coproporphyrinogen-III to yield the vinyl groups in protoporphyrinogen-IX. This is Oxygen-dependent coproporphyrinogen-III oxidase from Rickettsia conorii (strain ATCC VR-613 / Malish 7).